The chain runs to 1100 residues: Isoleucine--tRNA ligase (1100 aa).

The 'HIGH' region signature appears at 48–58; the sequence is PFATGLPHFGH. A 'KMSKS' region motif is present at residues 626-630; the sequence is KMSKS. Lys-629 is an ATP binding site.

The protein belongs to the class-I aminoacyl-tRNA synthetase family. IleS type 2 subfamily. Monomer. Requires Zn(2+) as cofactor.

It localises to the cytoplasm. The enzyme catalyses tRNA(Ile) + L-isoleucine + ATP = L-isoleucyl-tRNA(Ile) + AMP + diphosphate. Catalyzes the attachment of isoleucine to tRNA(Ile). As IleRS can inadvertently accommodate and process structurally similar amino acids such as valine, to avoid such errors it has two additional distinct tRNA(Ile)-dependent editing activities. One activity is designated as 'pretransfer' editing and involves the hydrolysis of activated Val-AMP. The other activity is designated 'posttransfer' editing and involves deacylation of mischarged Val-tRNA(Ile). In Treponema denticola (strain ATCC 35405 / DSM 14222 / CIP 103919 / JCM 8153 / KCTC 15104), this protein is Isoleucine--tRNA ligase.